A 147-amino-acid chain; its full sequence is Thyrotropin subunit beta (147 aa).

The signal sequence occupies residues 1 to 20 (MRVVLLASAVLCLLAGQVLS). Cystine bridges form between C22–C72, C36–C87, C39–C126, C47–C103, C51–C105, and C108–C115. The N-linked (GlcNAc...) asparagine glycan is linked to N43.

This sequence belongs to the glycoprotein hormones subunit beta family. In terms of assembly, heterodimer of a common alpha chain and a unique beta chain which confers biological specificity to thyrotropin, lutropin, follitropin and gonadotropin.

Its subcellular location is the secreted. Its function is as follows. Indispensable for the control of thyroid structure and metabolism. May play some role in the biological processes of the immature fishes. The sequence is that of Thyrotropin subunit beta (tshb) from Anguilla anguilla (European freshwater eel).